A 100-amino-acid polypeptide reads, in one-letter code: Large ribosomal subunit protein uL23 (100 aa).

Belongs to the universal ribosomal protein uL23 family. Part of the 50S ribosomal subunit. Contacts protein L29, and trigger factor when it is bound to the ribosome.

In terms of biological role, one of the early assembly proteins it binds 23S rRNA. One of the proteins that surrounds the polypeptide exit tunnel on the outside of the ribosome. Forms the main docking site for trigger factor binding to the ribosome. In Aliivibrio fischeri (strain MJ11) (Vibrio fischeri), this protein is Large ribosomal subunit protein uL23.